The chain runs to 116 residues: Iron-sulfur cluster insertion protein ErpA (116 aa).

3 residues coordinate iron-sulfur cluster: cysteine 44, cysteine 108, and cysteine 110.

This sequence belongs to the HesB/IscA family. As to quaternary structure, homodimer. Requires iron-sulfur cluster as cofactor.

Its function is as follows. Required for insertion of 4Fe-4S clusters for at least IspG. The protein is Iron-sulfur cluster insertion protein ErpA of Shewanella amazonensis (strain ATCC BAA-1098 / SB2B).